Here is a 346-residue protein sequence, read N- to C-terminus: Glycerol-3-phosphate dehydrogenase [NAD(P)+] (346 aa).

Residues S15, W16, R36, and K110 each contribute to the NADPH site. Sn-glycerol 3-phosphate contacts are provided by K110, G139, and S141. A143 is a binding site for NADPH. Sn-glycerol 3-phosphate-binding residues include K194, D247, S257, R258, and N259. K194 functions as the Proton acceptor in the catalytic mechanism. Residue R258 coordinates NADPH. Residues V282 and E284 each coordinate NADPH.

The protein belongs to the NAD-dependent glycerol-3-phosphate dehydrogenase family.

The protein resides in the cytoplasm. It carries out the reaction sn-glycerol 3-phosphate + NAD(+) = dihydroxyacetone phosphate + NADH + H(+). The enzyme catalyses sn-glycerol 3-phosphate + NADP(+) = dihydroxyacetone phosphate + NADPH + H(+). It participates in membrane lipid metabolism; glycerophospholipid metabolism. Catalyzes the reduction of the glycolytic intermediate dihydroxyacetone phosphate (DHAP) to sn-glycerol 3-phosphate (G3P), the key precursor for phospholipid synthesis. In Xylella fastidiosa (strain Temecula1 / ATCC 700964), this protein is Glycerol-3-phosphate dehydrogenase [NAD(P)+].